The sequence spans 93 residues: UPF0223 protein LACR_0546 (93 aa).

Belongs to the UPF0223 family.

The polypeptide is UPF0223 protein LACR_0546 (Lactococcus lactis subsp. cremoris (strain SK11)).